Here is a 150-residue protein sequence, read N- to C-terminus: Infection structure-specific protein 24 (150 aa).

In terms of biological role, involved in the development of infection structures. The germ tube elongates across the leaf surface of the infected plant until it recognizes a stomate. Physical stimuli provided by the stomate induce differentiation of the germ tube to form a series of infection structures involved in host colonization. The protein is Infection structure-specific protein 24 (INF24) of Uromyces appendiculatus (Rust fungus).